The chain runs to 660 residues: Methionine--tRNA ligase 1 (660 aa).

The 'HIGH' region signature appears at 15-25 (YYPSGKLHIGH). Positions 310–314 (KMSKS) match the 'KMSKS' region motif. Residue lysine 313 coordinates ATP. Positions 560-660 (DFFKVELRVA…QNLPNGTKIK (101 aa)) constitute a tRNA-binding domain.

Belongs to the class-I aminoacyl-tRNA synthetase family. MetG type 2B subfamily. In terms of assembly, homodimer.

The protein resides in the cytoplasm. It catalyses the reaction tRNA(Met) + L-methionine + ATP = L-methionyl-tRNA(Met) + AMP + diphosphate. Its function is as follows. Is required not only for elongation of protein synthesis but also for the initiation of all mRNA translation through initiator tRNA(fMet) aminoacylation. In Bacillus cereus (strain ATCC 14579 / DSM 31 / CCUG 7414 / JCM 2152 / NBRC 15305 / NCIMB 9373 / NCTC 2599 / NRRL B-3711), this protein is Methionine--tRNA ligase 1.